Here is a 72-residue protein sequence, read N- to C-terminus: Translation initiation factor IF-1 (72 aa).

In terms of domain architecture, S1-like spans 1–72 (MAKEELLEFP…TKGRINYRFK (72 aa)).

Belongs to the IF-1 family. Component of the 30S ribosomal translation pre-initiation complex which assembles on the 30S ribosome in the order IF-2 and IF-3, IF-1 and N-formylmethionyl-tRNA(fMet); mRNA recruitment can occur at any time during PIC assembly.

The protein localises to the cytoplasm. Its function is as follows. One of the essential components for the initiation of protein synthesis. Stabilizes the binding of IF-2 and IF-3 on the 30S subunit to which N-formylmethionyl-tRNA(fMet) subsequently binds. Helps modulate mRNA selection, yielding the 30S pre-initiation complex (PIC). Upon addition of the 50S ribosomal subunit IF-1, IF-2 and IF-3 are released leaving the mature 70S translation initiation complex. The chain is Translation initiation factor IF-1 from Dinoroseobacter shibae (strain DSM 16493 / NCIMB 14021 / DFL 12).